We begin with the raw amino-acid sequence, 142 residues long: Large ribosomal subunit protein uL13 (142 aa).

The protein belongs to the universal ribosomal protein uL13 family. As to quaternary structure, part of the 50S ribosomal subunit.

Its function is as follows. This protein is one of the early assembly proteins of the 50S ribosomal subunit, although it is not seen to bind rRNA by itself. It is important during the early stages of 50S assembly. This is Large ribosomal subunit protein uL13 from Yersinia pseudotuberculosis serotype O:1b (strain IP 31758).